A 389-amino-acid polypeptide reads, in one-letter code: S-adenosylmethionine synthase (389 aa).

His17 contributes to the ATP binding site. Residue Asp19 participates in Mg(2+) binding. Glu45 provides a ligand contact to K(+). Residues Glu58 and Gln101 each contribute to the L-methionine site. Residues 101-111 (QSPDIAQGVTE) form a flexible loop region. Residues 168 to 170 (DSK), 234 to 235 (RF), Asp243, 249 to 250 (RK), Ala266, and Lys270 each bind ATP. Asp243 contributes to the L-methionine binding site. L-methionine is bound at residue Lys274.

This sequence belongs to the AdoMet synthase family. In terms of assembly, homotetramer; dimer of dimers. The cofactor is Mg(2+). K(+) is required as a cofactor.

It is found in the cytoplasm. The catalysed reaction is L-methionine + ATP + H2O = S-adenosyl-L-methionine + phosphate + diphosphate. Its pathway is amino-acid biosynthesis; S-adenosyl-L-methionine biosynthesis; S-adenosyl-L-methionine from L-methionine: step 1/1. Its function is as follows. Catalyzes the formation of S-adenosylmethionine (AdoMet) from methionine and ATP. The overall synthetic reaction is composed of two sequential steps, AdoMet formation and the subsequent tripolyphosphate hydrolysis which occurs prior to release of AdoMet from the enzyme. In Geobacter sp. (strain M21), this protein is S-adenosylmethionine synthase.